Here is a 120-residue protein sequence, read N- to C-terminus: uncharacterized protein (120 aa).

Helical transmembrane passes span 24–44 (ALLG…ALCY), 61–81 (IGVV…NLAV), and 86–106 (PLGK…GIVV).

The protein to M.leprae ML1176.

The protein localises to the cell membrane. This is an uncharacterized protein from Mycobacterium bovis (strain ATCC BAA-935 / AF2122/97).